The following is a 341-amino-acid chain: Zinc transporter ZIP11 (341 aa).

Transmembrane regions (helical) follow at residues 12–32 (LLGTFFTWGLTAAGAALVFVF), 44–64 (LGFAAGVMLAASYWSLLAPAV), 72–92 (GFGSLAFLPVAIGFTLGAAFV), 193–213 (IALLILAITIHNIPEGLAVGV), 262–284 (FWYGQLSGMVEPLAGVFGAFAVV), 289–306 (ILPYALAFAAGAMVYVIM), and 321–341 (LASWASILGFVVMMSLDVGLG).

It belongs to the ZIP transporter (TC 2.A.5) family.

Its subcellular location is the cell membrane. The protein resides in the nucleus. It is found in the cytoplasm. The protein localises to the golgi apparatus. It catalyses the reaction Zn(2+)(in) = Zn(2+)(out). The enzyme catalyses Cu(2+)(in) = Cu(2+)(out). Functionally, zinc importer that regulates cytosolic zinc concentrations either via zinc influx from the extracellular compartment or efflux from intracellular organelles such as Golgi apparatus. May transport copper ions as well. The transport mechanism remains to be elucidated. The chain is Zinc transporter ZIP11 (SLC39A11) from Bos taurus (Bovine).